The chain runs to 666 residues: Fructose-1,6-bisphosphatase class 3 (666 aa).

It belongs to the FBPase class 3 family. The cofactor is Mn(2+).

The enzyme catalyses beta-D-fructose 1,6-bisphosphate + H2O = beta-D-fructose 6-phosphate + phosphate. It participates in carbohydrate biosynthesis; gluconeogenesis. The polypeptide is Fructose-1,6-bisphosphatase class 3 (Phocaeicola vulgatus (strain ATCC 8482 / DSM 1447 / JCM 5826 / CCUG 4940 / NBRC 14291 / NCTC 11154) (Bacteroides vulgatus)).